The chain runs to 366 residues: 3-dehydroquinate synthase (366 aa).

NAD(+)-binding positions include 74 to 79, 108 to 112, 132 to 133, lysine 144, lysine 153, and 171 to 174; these read SGEAAK, GVVGD, TT, and FLRT. Zn(2+)-binding residues include glutamate 186, histidine 249, and histidine 266.

This sequence belongs to the sugar phosphate cyclases superfamily. Dehydroquinate synthase family. It depends on Co(2+) as a cofactor. The cofactor is Zn(2+). NAD(+) is required as a cofactor.

The protein resides in the cytoplasm. The enzyme catalyses 7-phospho-2-dehydro-3-deoxy-D-arabino-heptonate = 3-dehydroquinate + phosphate. The protein operates within metabolic intermediate biosynthesis; chorismate biosynthesis; chorismate from D-erythrose 4-phosphate and phosphoenolpyruvate: step 2/7. In terms of biological role, catalyzes the conversion of 3-deoxy-D-arabino-heptulosonate 7-phosphate (DAHP) to dehydroquinate (DHQ). The sequence is that of 3-dehydroquinate synthase from Geobacillus thermodenitrificans (strain NG80-2).